Here is a 228-residue protein sequence, read N- to C-terminus: Ribonuclease 3 (228 aa).

The RNase III domain occupies 2-130; the sequence is LTYLEQKINY…LLAAVYLDGG (129 aa). Residue Glu-43 coordinates Mg(2+). Residue Asp-47 is part of the active site. The Mg(2+) site is built by Asp-116 and Glu-119. The active site involves Glu-119. The DRBM domain maps to 157–226; sequence DYKTRLQEVV…AMEALSKLGI (70 aa).

Belongs to the ribonuclease III family. In terms of assembly, homodimer. Mg(2+) is required as a cofactor.

Its subcellular location is the cytoplasm. The catalysed reaction is Endonucleolytic cleavage to 5'-phosphomonoester.. Its function is as follows. Digests double-stranded RNA. Involved in the processing of primary rRNA transcript to yield the immediate precursors to the large and small rRNAs (23S and 16S). Processes some mRNAs, and tRNAs when they are encoded in the rRNA operon. Processes pre-crRNA and tracrRNA of type II CRISPR loci if present in the organism. The sequence is that of Ribonuclease 3 from Caldanaerobacter subterraneus subsp. tengcongensis (strain DSM 15242 / JCM 11007 / NBRC 100824 / MB4) (Thermoanaerobacter tengcongensis).